The primary structure comprises 352 residues: Desmethylxanthohumol 6'-O-methyltransferase (352 aa).

Aspartate 219 provides a ligand contact to S-adenosyl-L-methionine. The active-site Proton acceptor is histidine 257.

It belongs to the class I-like SAM-binding methyltransferase superfamily. Cation-independent O-methyltransferase family. In terms of assembly, homodimer. Highly expressed in lupulin glands. Detected in early-, mid- and late-stage cones.

It localises to the cytoplasm. It carries out the reaction desmethylxanthohumol + S-adenosyl-L-methionine = xanthohumol + S-adenosyl-L-homocysteine + H(+). It catalyses the reaction xanthogalenol + S-adenosyl-L-methionine = 4'-O-methylxanthohumol + S-adenosyl-L-homocysteine + H(+). The protein operates within secondary metabolite biosynthesis. With respect to regulation, inhibited by S-adenosyl homocysteine. Functionally, involved in the biosynthesis of prenylated phenolics natural products which contribute to the bitter taste of beer and display broad biological activities. Catalyzes the biosynthesis of xanthohumol. Methylates desmethylxanthohumol and xanthogalenol, but not caffeic acid, prenylflavanones, simple phenols or phenylpropanoids. The protein is Desmethylxanthohumol 6'-O-methyltransferase of Humulus lupulus (European hop).